The sequence spans 574 residues: Urease subunit alpha (574 aa).

A Urease domain is found at 131–574 (GAIDSHIHFI…LPMAQRYLLI (444 aa)). Ni(2+) contacts are provided by His-136, His-138, and Lys-219. Lys-219 carries the N6-carboxylysine modification. His-221 serves as a coordination point for substrate. His-248 and His-274 together coordinate Ni(2+). The Proton donor role is filled by His-322. Asp-362 contacts Ni(2+).

Belongs to the metallo-dependent hydrolases superfamily. Urease alpha subunit family. Heterotrimer of UreA (gamma), UreB (beta) and UreC (alpha) subunits. Three heterotrimers associate to form the active enzyme. Ni cation serves as cofactor. Post-translationally, carboxylation allows a single lysine to coordinate two nickel ions.

Its subcellular location is the cytoplasm. The catalysed reaction is urea + 2 H2O + H(+) = hydrogencarbonate + 2 NH4(+). It participates in nitrogen metabolism; urea degradation; CO(2) and NH(3) from urea (urease route): step 1/1. In Prochlorococcus marinus (strain MIT 9303), this protein is Urease subunit alpha.